Reading from the N-terminus, the 145-residue chain is D-aminoacyl-tRNA deacylase (145 aa).

Positions 137–138 (GP) match the Gly-cisPro motif, important for rejection of L-amino acids motif.

This sequence belongs to the DTD family. In terms of assembly, homodimer.

Its subcellular location is the cytoplasm. It catalyses the reaction glycyl-tRNA(Ala) + H2O = tRNA(Ala) + glycine + H(+). The enzyme catalyses a D-aminoacyl-tRNA + H2O = a tRNA + a D-alpha-amino acid + H(+). An aminoacyl-tRNA editing enzyme that deacylates mischarged D-aminoacyl-tRNAs. Also deacylates mischarged glycyl-tRNA(Ala), protecting cells against glycine mischarging by AlaRS. Acts via tRNA-based rather than protein-based catalysis; rejects L-amino acids rather than detecting D-amino acids in the active site. By recycling D-aminoacyl-tRNA to D-amino acids and free tRNA molecules, this enzyme counteracts the toxicity associated with the formation of D-aminoacyl-tRNA entities in vivo and helps enforce protein L-homochirality. This is D-aminoacyl-tRNA deacylase from Shewanella baltica (strain OS223).